Consider the following 540-residue polypeptide: L-aspartate oxidase (540 aa).

FAD is bound by residues 16–19 (SGAA), K38, 45–52 (STFYAQGG), 161–162 (NA), and D223. Succinate is bound by residues H244 and 259–260 (TE). Catalysis depends on R290, which acts as the Proton donor/acceptor. FAD is bound at residue E375. Residue S389 participates in succinate binding. 391–392 (SL) contacts FAD.

It belongs to the FAD-dependent oxidoreductase 2 family. NadB subfamily. As to quaternary structure, monomer. Homodimer. Both the monomeric and dimeric forms of the enzyme are catalytically active. Requires FAD as cofactor.

The protein resides in the cytoplasm. It catalyses the reaction L-aspartate + O2 = iminosuccinate + H2O2. The catalysed reaction is fumarate + L-aspartate = iminosuccinate + succinate. It participates in cofactor biosynthesis; NAD(+) biosynthesis; iminoaspartate from L-aspartate (oxidase route): step 1/1. Its activity is regulated as follows. Inhibited by the product iminoaspartate. Competitively inhibited by mesotartrate. NAD acts as a competitive inhibitor to FAD. Inhibited by iodoacetic acid, diethylpyrocarbonate and tetranitromethane. In terms of biological role, catalyzes the oxidation of L-aspartate to iminoaspartate, the first step in the de novo biosynthesis of NAD(+). Can use either oxygen or fumarate as electron acceptors, which allows the enzyme to be functional under aerobic and anaerobic conditions. In vivo, fumarate is used under anaerobic conditions, and oxygen is the predominant electron acceptor under aerobic conditions due to the lower fumarate levels. In vitro, fumarate is a more efficient electron acceptor and is kinetically superior to oxygen. This is L-aspartate oxidase from Escherichia coli (strain K12).